The sequence spans 335 residues: Atypical chemokine receptor 1 (335 aa).

At 1–62 (MGNCLHPAEL…CNLLDDSALP (62 aa)) the chain is on the extracellular side. N-linked (GlcNAc...) asparagine glycosylation is found at asparagine 16, asparagine 26, and asparagine 32. Intrachain disulfides connect cysteine 50-cysteine 275 and cysteine 128-cysteine 194. The chain crosses the membrane as a helical span at residues 63 to 83 (FFILVSVLGILASGTVLFMFF). Residues 84–94 (RPLFHWQLCPG) are Cytoplasmic-facing. A helical transmembrane segment spans residues 95–115 (WPVLAQLAVGSALFSIVVPIL). Over 116–128 (APGLGNTRSSALC) the chain is Extracellular. Residues 129–152 (SLGYCVWYGSAFAQALLLGCHASL) form a helical membrane-spanning segment. Residues 153-165 (GPKLGAGQVPGLT) lie on the Cytoplasmic side of the membrane. The helical transmembrane segment at 166 to 186 (LGLSVGLWGVAALLTLPITLA) threads the bilayer. Residues 187-206 (SGASGGLCTPAYSMELKALQ) are Extracellular-facing. A helical transmembrane segment spans residues 207–227 (ATHAVACLAVFVLLPLGLFGA). The Cytoplasmic portion of the chain corresponds to 228–243 (KGLKKALGMGPGPWMN). Residues 244–264 (ILWAWFIFWWPHGVVLGLDFL) form a helical membrane-spanning segment. Over 265–286 (VRSKLLLLSTCLAQQALDLLLN) the chain is Extracellular. The helical transmembrane segment at 287 to 307 (LAEALAILHCVATPLLLALFC) threads the bilayer. At 308–335 (HQATRTLLPSLPLPEGWSSHLDTLGSES) the chain is on the cytoplasmic side.

This sequence belongs to the G-protein coupled receptor 1 family. Atypical chemokine receptor subfamily. (Microbial infection) Interacts (via N-terminal extracellular domain) with Plasmodium knowlesi Duffy receptor alpha form (DBPalpha) (via region II).

The protein localises to the early endosome. It localises to the recycling endosome. It is found in the membrane. Atypical chemokine receptor that controls chemokine levels and localization via high-affinity chemokine binding that is uncoupled from classic ligand-driven signal transduction cascades, resulting instead in chemokine sequestration, degradation, or transcytosis. Also known as interceptor (internalizing receptor) or chemokine-scavenging receptor or chemokine decoy receptor. Has a promiscuous chemokine-binding profile, interacting with inflammatory chemokines of both the CXC and the CC subfamilies but not with homeostatic chemokines. Acts as a receptor for chemokines including CCL2, CCL5, CCL7, CCL11, CCL13, CCL14, CCL17, CXCL5, CXCL6, IL8/CXCL8, CXCL11, GRO, RANTES, MCP-1 and TARC. May regulate chemokine bioavailability and, consequently, leukocyte recruitment through two distinct mechanisms: when expressed in endothelial cells, it sustains the abluminal to luminal transcytosis of tissue-derived chemokines and their subsequent presentation to circulating leukocytes; when expressed in erythrocytes, serves as blood reservoir of cognate chemokines but also as a chemokine sink, buffering potential surges in plasma chemokine levels. Its function is as follows. (Microbial infection) Acts as a receptor for the malaria parasite Plasmodium knowlesi. This Macaca mulatta (Rhesus macaque) protein is Atypical chemokine receptor 1 (ACKR1).